The primary structure comprises 146 residues: Lipoprotein signal peptidase (146 aa).

3 helical membrane-spanning segments follow: residues 10 to 30 (GLFVLVFAIDQAIKALILGGF), 54 to 74 (FLEGWLKYIQLGMLGGILLFL), and 80 to 100 (FFVAHYLPLSILLAAGFSNIL). Catalysis depends on residues Asp110 and Asp127. Residues 118–138 (FEFAIFNFADVMIDVAVALFL) form a helical membrane-spanning segment.

Belongs to the peptidase A8 family.

The protein localises to the cell inner membrane. The enzyme catalyses Release of signal peptides from bacterial membrane prolipoproteins. Hydrolyzes -Xaa-Yaa-Zaa-|-(S,diacylglyceryl)Cys-, in which Xaa is hydrophobic (preferably Leu), and Yaa (Ala or Ser) and Zaa (Gly or Ala) have small, neutral side chains.. It participates in protein modification; lipoprotein biosynthesis (signal peptide cleavage). This protein specifically catalyzes the removal of signal peptides from prolipoproteins. This chain is Lipoprotein signal peptidase, found in Wolinella succinogenes (strain ATCC 29543 / DSM 1740 / CCUG 13145 / JCM 31913 / LMG 7466 / NCTC 11488 / FDC 602W) (Vibrio succinogenes).